The sequence spans 1875 residues: Soluble starch synthase 3a, chloroplastic/amyloplastic (1875 aa).

A chloroplast-targeting transit peptide spans 1–49; that stretch reads MEMALRPQSLLCPRSRLKVVIRPASSASGGGLAQYFLMTRRYTGSRIVR. A coiled-coil region spans residues 1007–1065; sequence KRELERVATEEAERRRHAEEQQRMGEQRAAEQAAREQAKKEIELKKNKLQNLLSSARTH. Positions 1014 to 1043 are disordered; that stretch reads ATEEAERRRHAEEQQRMGEQRAAEQAAREQ.

It belongs to the glycosyltransferase 1 family. Bacterial/plant glycogen synthase subfamily. Expressed in the endosperm.

The protein localises to the plastid. It is found in the chloroplast. The protein resides in the amyloplast. It catalyses the reaction [(1-&gt;4)-alpha-D-glucosyl](n) + ADP-alpha-D-glucose = [(1-&gt;4)-alpha-D-glucosyl](n+1) + ADP + H(+). Its pathway is glycan biosynthesis; starch biosynthesis. In terms of biological role, involved in starch synthesis in endosperm amyloplasts. Plays an important role in the elongation of amylopectin B chains. The chain is Soluble starch synthase 3a, chloroplastic/amyloplastic from Oryza sativa subsp. japonica (Rice).